The sequence spans 2188 residues: Tiggrin (2188 aa).

Residues 1–18 (MRALGGITLLLAVAICQG) form the signal peptide. Coiled-coil stretches lie at residues 570 to 635 (SRLE…EHIK), 1009 to 1050 (LKNL…EIES), 1312 to 1343 (TFVE…EIEE), and 1613 to 1641 (KQQR…AQYH). A disordered region spans residues 1984–2188 (IFSKDRGDQP…FWEKLKEKLG (205 aa)). Basic and acidic residues predominate over residues 1985–1998 (FSKDRGDQPPHTYD). The Cell attachment site signature appears at 1989–1991 (RGD). Positions 2000 to 2009 (SFVEGDEPGL) are enriched in acidic residues. Pro residues predominate over residues 2016-2033 (PRPPNPAPIVSTPKPPLP). Composition is skewed to low complexity over residues 2057–2077 (GSAS…ASAS) and 2091–2101 (QQEVDLGQQQQ). The span at 2115 to 2139 (GQQTQVEDTDWNQQAEDLGQQQQVQ) shows a compositional bias: polar residues. Over residues 2148 to 2165 (QTQGHSSSSNSRSQPLQQ) the composition is skewed to low complexity. Basic and acidic residues predominate over residues 2179-2188 (FWEKLKEKLG).

In terms of processing, O-glycosylation by pgant3 is required for proper secretion and localization to the basal cell layer interface during wing development. As to expression, in embryos, expressed in the apodemes (muscle attachment sites) of the major longitudinal muscles 4, 6, 7, 12 and 13 and the wide dorsal oblique muscles 9 and 10, in hemocytes, in fat body cells, in basement membranes surrounding the gut and in the commissures of the ventral nerve cord. Expressed in larval imaginal wing disk and in pupal wing. In adult flies, expressed in the jump muscle (at protein level).

The protein localises to the secreted. It localises to the extracellular space. It is found in the extracellular matrix. Functionally, functions as a ligand for integrin alpha-PS2/beta-PS. Required in larvae for proper muscle structure and function. Involved in the regulation of cell adhesion during wing development. This is Tiggrin from Drosophila melanogaster (Fruit fly).